A 140-amino-acid chain; its full sequence is Non-specific lipid transfer protein GPI-anchored 33 (140 aa).

A signal peptide spans 1–27 (MAYTNKVTISAAVATMMLFLAVTIVDA). 4 disulfides stabilise this stretch: Cys40-Cys80, Cys52-Cys64, Cys65-Cys104, and Cys78-Cys112. The N-linked (GlcNAc...) asparagine glycan is linked to Asn91. Gly115 carries GPI-anchor amidated glycine lipidation. A propeptide spans 116–140 (DASGGSTNKIAASMVLLGLVASLFF) (removed in mature form).

Belongs to the plant LTP family.

The protein resides in the cell membrane. Its function is as follows. Probable lipid transfer protein. This is Non-specific lipid transfer protein GPI-anchored 33 from Arabidopsis thaliana (Mouse-ear cress).